Here is an 858-residue protein sequence, read N- to C-terminus: DNA mismatch repair protein MutS (858 aa).

602–609 (GPNMSGKS) is a binding site for ATP.

This sequence belongs to the DNA mismatch repair MutS family.

In terms of biological role, this protein is involved in the repair of mismatches in DNA. It is possible that it carries out the mismatch recognition step. This protein has a weak ATPase activity. Overexpression of mutSL partially suppresses the high spontaneous mutation frequency of a ytkD/mutM/mutY triple disruption which lacks the system required to prevent damage by oxidized guanine (8-oxo-dGTP). This suggests that MutSL also functions to repair mismatches due to oxidative stress in both growing and stationary phase cells. This Bacillus subtilis (strain 168) protein is DNA mismatch repair protein MutS.